Consider the following 152-residue polypeptide: ESAT-6 secretion machinery protein EssA (152 aa).

Topologically, residues 1–114 are cytoplasmic; it reads MLMNSVIALT…PYIQNKQEKK (114 aa). Residues 115–135 form a helical membrane-spanning segment; sequence IFPYILMSVGAFLTLGFVIFS. The Extracellular segment spans residues 136–152; the sequence is IHKGRRTKNESARKSNI.

The protein belongs to the EssA family.

It localises to the cell membrane. Functionally, component of the ESAT-6 secretion system (Ess). Required for the secretion of EsxA and EsxB. In Staphylococcus aureus (strain Mu50 / ATCC 700699), this protein is ESAT-6 secretion machinery protein EssA.